The sequence spans 201 residues: Probable nicotinate-nucleotide adenylyltransferase (201 aa).

It belongs to the NadD family.

It catalyses the reaction nicotinate beta-D-ribonucleotide + ATP + H(+) = deamido-NAD(+) + diphosphate. Its pathway is cofactor biosynthesis; NAD(+) biosynthesis; deamido-NAD(+) from nicotinate D-ribonucleotide: step 1/1. Its function is as follows. Catalyzes the reversible adenylation of nicotinate mononucleotide (NaMN) to nicotinic acid adenine dinucleotide (NaAD). The protein is Probable nicotinate-nucleotide adenylyltransferase of Clostridium botulinum (strain Okra / Type B1).